The sequence spans 197 residues: Large ribosomal subunit protein bL9c (197 aa).

The transit peptide at 1–42 (MASSTALSLSWSSSPCWSHSFNGGANETLKVSERRFNFEVVS) directs the protein to the chloroplast.

It belongs to the bacterial ribosomal protein bL9 family. As to quaternary structure, part of the 50S ribosomal subunit.

The protein localises to the plastid. It localises to the chloroplast. Functionally, binds to the 23S rRNA. The polypeptide is Large ribosomal subunit protein bL9c (RPL9) (Arabidopsis thaliana (Mouse-ear cress)).